Consider the following 455-residue polypeptide: La-related protein 6C (455 aa).

Positions 1–20 (MAQMQREEVESVTTEKKRLD) are enriched in basic and acidic residues. Residues 1–29 (MAQMQREEVESVTTEKKRLDGGGGSSGAQ) are disordered. Positions 138–229 (NLLSDDLRLK…KRTSQFTDRD (92 aa)) constitute an HTH La-type RNA-binding domain. The RRM domain maps to 236-324 (RTVVAENLPD…KGLRVRLLLR (89 aa)). 2 disordered regions span residues 348–396 (SYES…YAVG) and 414–455 (SLGS…PNNL).

It localises to the nucleus. Transcriptional regulator. In Arabidopsis thaliana (Mouse-ear cress), this protein is La-related protein 6C (LARP6C).